The primary structure comprises 93 residues: Small ribosomal subunit protein uS19 (93 aa).

It belongs to the universal ribosomal protein uS19 family.

Its function is as follows. Protein S19 forms a complex with S13 that binds strongly to the 16S ribosomal RNA. The polypeptide is Small ribosomal subunit protein uS19 (Acidothermus cellulolyticus (strain ATCC 43068 / DSM 8971 / 11B)).